The chain runs to 920 residues: Isoleucine--tRNA ligase (920 aa).

Positions 57 to 67 (PYANGDIHLGH) match the 'HIGH' region motif. Glutamate 560 is an L-isoleucyl-5'-AMP binding site. The 'KMSKS' region signature appears at 601 to 605 (KMSKS). Lysine 604 contacts ATP. Residues cysteine 890, cysteine 893, cysteine 910, and cysteine 913 each coordinate Zn(2+).

Belongs to the class-I aminoacyl-tRNA synthetase family. IleS type 1 subfamily. As to quaternary structure, monomer. Zn(2+) serves as cofactor.

Its subcellular location is the cytoplasm. It catalyses the reaction tRNA(Ile) + L-isoleucine + ATP = L-isoleucyl-tRNA(Ile) + AMP + diphosphate. Functionally, catalyzes the attachment of isoleucine to tRNA(Ile). As IleRS can inadvertently accommodate and process structurally similar amino acids such as valine, to avoid such errors it has two additional distinct tRNA(Ile)-dependent editing activities. One activity is designated as 'pretransfer' editing and involves the hydrolysis of activated Val-AMP. The other activity is designated 'posttransfer' editing and involves deacylation of mischarged Val-tRNA(Ile). The chain is Isoleucine--tRNA ligase from Caldicellulosiruptor saccharolyticus (strain ATCC 43494 / DSM 8903 / Tp8T 6331).